We begin with the raw amino-acid sequence, 445 residues long: Phosphoglucosamine mutase (445 aa).

Ser-104 functions as the Phosphoserine intermediate in the catalytic mechanism. Residues Ser-104, Asp-243, Asp-245, and Asp-247 each contribute to the Mg(2+) site. Ser-104 is subject to Phosphoserine.

The protein belongs to the phosphohexose mutase family. Mg(2+) serves as cofactor. Activated by phosphorylation.

The catalysed reaction is alpha-D-glucosamine 1-phosphate = D-glucosamine 6-phosphate. Functionally, catalyzes the conversion of glucosamine-6-phosphate to glucosamine-1-phosphate. This chain is Phosphoglucosamine mutase, found in Neisseria subflava.